The following is a 248-amino-acid chain: Triosephosphate isomerase (248 aa).

Residues Asn-11 and Lys-13 each coordinate substrate. Residue His-95 is the Electrophile of the active site. Catalysis depends on Glu-165, which acts as the Proton acceptor.

This sequence belongs to the triosephosphate isomerase family. In terms of assembly, homodimer.

Its subcellular location is the cytoplasm. It carries out the reaction dihydroxyacetone phosphate = methylglyoxal + phosphate. The enzyme catalyses D-glyceraldehyde 3-phosphate = dihydroxyacetone phosphate. It participates in carbohydrate degradation; glycolysis; D-glyceraldehyde 3-phosphate from glycerone phosphate: step 1/1. The protein operates within carbohydrate biosynthesis; gluconeogenesis. Its function is as follows. Triosephosphate isomerase is an extremely efficient metabolic enzyme that catalyzes the interconversion between dihydroxyacetone phosphate (DHAP) and D-glyceraldehyde-3-phosphate (G3P) in glycolysis and gluconeogenesis. In terms of biological role, it is also responsible for the non-negligible production of methylglyoxal a reactive cytotoxic side-product that modifies and can alter proteins, DNA and lipids. This Xenopus laevis (African clawed frog) protein is Triosephosphate isomerase (tpi1).